A 314-amino-acid polypeptide reads, in one-letter code: DNA-directed RNA polymerase subunit alpha (314 aa).

An alpha N-terminal domain (alpha-NTD) region spans residues 1 to 228 (MAQFQIECVE…NLFIPLKDLN (228 aa)). The segment at 243-314 (PESQIPIEEL…ITLPHEKAKA (72 aa)) is alpha C-terminal domain (alpha-CTD).

This sequence belongs to the RNA polymerase alpha chain family. Homodimer. In cyanobacteria the RNAP catalytic core is composed of 2 alpha, 1 beta, 1 beta', 1 gamma and 1 omega subunit. When a sigma factor is associated with the core the holoenzyme is formed, which can initiate transcription.

The enzyme catalyses RNA(n) + a ribonucleoside 5'-triphosphate = RNA(n+1) + diphosphate. DNA-dependent RNA polymerase catalyzes the transcription of DNA into RNA using the four ribonucleoside triphosphates as substrates. The chain is DNA-directed RNA polymerase subunit alpha from Synechocystis sp. (strain ATCC 27184 / PCC 6803 / Kazusa).